Reading from the N-terminus, the 213-residue chain is Na(+)-translocating NADH-quinone reductase subunit D (213 aa).

A run of 6 helical transmembrane segments spans residues 21–41, 42–62, 77–97, 101–121, 131–151, and 183–203; these read PLIAILGICSALAVTTTVKTA, ITMGLAVSFVTGCSSFFVSLL, IIISLFVIVIDQFLKAFFFNI, LSVFVGLIITNCIVMGRAESL, FLDGLASGLGYGWVLVFVSII, and FGLMVLAPSAFFLLGIMIWVV.

The protein belongs to the NqrDE/RnfAE family. As to quaternary structure, composed of six subunits; NqrA, NqrB, NqrC, NqrD, NqrE and NqrF.

It localises to the cell inner membrane. It carries out the reaction a ubiquinone + n Na(+)(in) + NADH + H(+) = a ubiquinol + n Na(+)(out) + NAD(+). In terms of biological role, NQR complex catalyzes the reduction of ubiquinone-1 to ubiquinol by two successive reactions, coupled with the transport of Na(+) ions from the cytoplasm to the periplasm. NqrA to NqrE are probably involved in the second step, the conversion of ubisemiquinone to ubiquinol. The protein is Na(+)-translocating NADH-quinone reductase subunit D of Chlamydia felis (strain Fe/C-56) (Chlamydophila felis).